The sequence spans 299 residues: uncharacterized protein (299 aa).

Residues Thr47 and Tyr109 each act as charge relay system in the active site. Residue Tyr138 is the Proton donor of the active site. Residue Lys168 is the Schiff-base intermediate with substrate of the active site.

It belongs to the DapA family. In terms of assembly, homotetramer.

Its subcellular location is the cytoplasm. This is an uncharacterized protein from Chloroflexus aurantiacus (strain ATCC 29366 / DSM 635 / J-10-fl).